A 195-amino-acid chain; its full sequence is 22.0 kDa heat shock protein (195 aa).

The first 21 residues, 1–21 (MMKHLLSIFFIGALLLGNIKT), serve as a signal peptide directing secretion. The 119-residue stretch at 62 to 180 (RDTSVALSPA…GPRVVNIAAE (119 aa)) folds into the sHSP domain. The N-linked (GlcNAc...) asparagine glycan is linked to asparagine 160.

Belongs to the small heat shock protein (HSP20) family. May form oligomeric structures.

Its subcellular location is the endoplasmic reticulum. The sequence is that of 22.0 kDa heat shock protein (HSP22.0) from Arabidopsis thaliana (Mouse-ear cress).